A 180-amino-acid chain; its full sequence is Chromosome-anchoring protein RacA (180 aa).

The segment at residues 5–25 (TPFIAKKLGVSPKAVVRIAQQ) is a DNA-binding region (H-T-H motif). Positions 67 to 151 (KASSNEVEEL…LEAALTKEEP (85 aa)) form a coiled coil.

It belongs to the RacA family.

The protein localises to the cytoplasm. Functionally, required for the formation of axial filaments and for anchoring the origin regions at the cell poles in sporulating cells, thus ensuring proper chromosome segregation in the prespore. Binds in a dispersed manner throughout the chromosome but preferentially to sites clustered in the origin portion of the chromosome, causing condensation of the chromosome and its remodeling into an elongated, anchored structure. In Bacillus cereus (strain B4264), this protein is Chromosome-anchoring protein RacA.